Consider the following 465-residue polypeptide: Putative F-box protein At1g21990 (465 aa).

The 47-residue stretch at 8-54 (RDLISGSPDEILGKILSFLPTHHAATTSVLSKRWRNLLPLVDKLELT) folds into the F-box domain.

The protein is Putative F-box protein At1g21990 of Arabidopsis thaliana (Mouse-ear cress).